The following is a 228-amino-acid chain: Ribosomal RNA small subunit methyltransferase G (228 aa).

Residues G89, L94, 140 to 141 (VE), and R159 contribute to the S-adenosyl-L-methionine site.

Belongs to the methyltransferase superfamily. RNA methyltransferase RsmG family.

It is found in the cytoplasm. It carries out the reaction guanosine(527) in 16S rRNA + S-adenosyl-L-methionine = N(7)-methylguanosine(527) in 16S rRNA + S-adenosyl-L-homocysteine. Its function is as follows. Specifically methylates the N7 position of guanine in position 527 of 16S rRNA. This Burkholderia ambifaria (strain ATCC BAA-244 / DSM 16087 / CCUG 44356 / LMG 19182 / AMMD) (Burkholderia cepacia (strain AMMD)) protein is Ribosomal RNA small subunit methyltransferase G.